The following is a 247-amino-acid chain: Orotidine 5'-phosphate decarboxylase (247 aa).

Residues aspartate 16, lysine 38, 66–75 (DLKFHDIPNT), threonine 130, arginine 191, glutamine 200, glycine 220, and arginine 221 contribute to the substrate site. Lysine 68 acts as the Proton donor in catalysis.

Belongs to the OMP decarboxylase family. Type 1 subfamily. In terms of assembly, homodimer.

It catalyses the reaction orotidine 5'-phosphate + H(+) = UMP + CO2. It functions in the pathway pyrimidine metabolism; UMP biosynthesis via de novo pathway; UMP from orotate: step 2/2. In terms of biological role, catalyzes the decarboxylation of orotidine 5'-monophosphate (OMP) to uridine 5'-monophosphate (UMP). The protein is Orotidine 5'-phosphate decarboxylase of Rhodospirillum rubrum (strain ATCC 11170 / ATH 1.1.1 / DSM 467 / LMG 4362 / NCIMB 8255 / S1).